We begin with the raw amino-acid sequence, 618 residues long: Beta-glucosidase C (618 aa).

The first 19 residues, 1 to 19, serve as a signal peptide directing secretion; that stretch reads MRVDSTVLALVALATDCLG. N-linked (GlcNAc...) asparagine glycosylation is found at asparagine 40, asparagine 82, asparagine 104, asparagine 211, and asparagine 263. The active site involves aspartate 330. N-linked (GlcNAc...) asparagine glycosylation is found at asparagine 417, asparagine 448, asparagine 477, asparagine 482, asparagine 502, and asparagine 517.

The protein belongs to the glycosyl hydrolase 3 family.

Its subcellular location is the secreted. The enzyme catalyses Hydrolysis of terminal, non-reducing beta-D-glucosyl residues with release of beta-D-glucose.. Its pathway is glycan metabolism; cellulose degradation. In terms of biological role, beta-glucosidases are one of a number of cellulolytic enzymes involved in the degradation of cellulosic biomass. Catalyzes the last step releasing glucose from the inhibitory cellobiose. This chain is Beta-glucosidase C (bglC), found in Emericella nidulans (strain FGSC A4 / ATCC 38163 / CBS 112.46 / NRRL 194 / M139) (Aspergillus nidulans).